Reading from the N-terminus, the 269-residue chain is Senescence-associated protein 13 (269 aa).

21–45 (LVTGGSKGIGEAVVEELAMLGAKVH) contacts NADP(+). S154 serves as a coordination point for substrate. Y167 functions as the Proton acceptor in the catalytic mechanism.

It belongs to the short-chain dehydrogenases/reductases (SDR) family. SDR65C subfamily.

Unspecific reductase providing both diastereomeric alcohols from the prochiral ketones. Active on cyclic monoterpenes and small flexible lipophilic carbonyls. No activity with tropinone, nitrogen-containing tropinone analogs, tropine or pseudotropine as substrate. The sequence is that of Senescence-associated protein 13 from Arabidopsis thaliana (Mouse-ear cress).